A 729-amino-acid chain; its full sequence is Fatty acid oxidation complex subunit alpha (729 aa).

Residues M1–K189 are enoyl-CoA hydratase/isomerase. Residue D296 coordinates substrate. The interval E311–A729 is 3-hydroxyacyl-CoA dehydrogenase. NAD(+)-binding positions include M324, D343, V400–E402, K407, and S429. H450 acts as the For 3-hydroxyacyl-CoA dehydrogenase activity in catalysis. Residue N453 coordinates NAD(+). Substrate-binding residues include N500 and Y660. The disordered stretch occupies residues R708–A729.

This sequence in the N-terminal section; belongs to the enoyl-CoA hydratase/isomerase family. The protein in the C-terminal section; belongs to the 3-hydroxyacyl-CoA dehydrogenase family. Heterotetramer of two alpha chains (FadB) and two beta chains (FadA).

The catalysed reaction is a (3S)-3-hydroxyacyl-CoA + NAD(+) = a 3-oxoacyl-CoA + NADH + H(+). The enzyme catalyses a (3S)-3-hydroxyacyl-CoA = a (2E)-enoyl-CoA + H2O. It catalyses the reaction a 4-saturated-(3S)-3-hydroxyacyl-CoA = a (3E)-enoyl-CoA + H2O. It carries out the reaction (3S)-3-hydroxybutanoyl-CoA = (3R)-3-hydroxybutanoyl-CoA. The catalysed reaction is a (3Z)-enoyl-CoA = a 4-saturated (2E)-enoyl-CoA. The enzyme catalyses a (3E)-enoyl-CoA = a 4-saturated (2E)-enoyl-CoA. Its pathway is lipid metabolism; fatty acid beta-oxidation. Involved in the aerobic and anaerobic degradation of long-chain fatty acids via beta-oxidation cycle. Catalyzes the formation of 3-oxoacyl-CoA from enoyl-CoA via L-3-hydroxyacyl-CoA. It can also use D-3-hydroxyacyl-CoA and cis-3-enoyl-CoA as substrate. The sequence is that of Fatty acid oxidation complex subunit alpha from Escherichia coli (strain UTI89 / UPEC).